The sequence spans 690 residues: Guanylate cyclase soluble subunit alpha-1 (690 aa).

Residue serine 267 is modified to Phosphoserine. The region spanning 481–608 (TMLFSDIVGF…NNVTLANKFE (128 aa)) is the Guanylate cyclase domain.

It belongs to the adenylyl cyclase class-4/guanylyl cyclase family. As to quaternary structure, the active enzyme is formed by a heterodimer of an alpha and a beta subunit. Heterodimer with GUCY1B1. Mg(2+) serves as cofactor. Requires Mn(2+) as cofactor.

Its subcellular location is the cytoplasm. The enzyme catalyses GTP = 3',5'-cyclic GMP + diphosphate. Its activity is regulated as follows. Activated by nitric oxide in the presence of magnesium or manganese ions. In Canis lupus familiaris (Dog), this protein is Guanylate cyclase soluble subunit alpha-1 (GUCY1A1).